Here is a 341-residue protein sequence, read N- to C-terminus: Cytoplasmic tRNA 2-thiolation protein 1 (341 aa).

Belongs to the TtcA family. CTU1/NCS6/ATPBD3 subfamily.

The protein localises to the cytoplasm. It participates in tRNA modification; 5-methoxycarbonylmethyl-2-thiouridine-tRNA biosynthesis. In terms of biological role, plays a central role in 2-thiolation of mcm(5)S(2)U at tRNA wobble positions of tRNA(Lys), tRNA(Glu) and tRNA(Gln). Directly binds tRNAs and probably acts by catalyzing adenylation of tRNAs, an intermediate required for 2-thiolation. It is unclear whether it acts as a sulfurtransferase that transfers sulfur from thiocarboxylated URM1 onto the uridine of tRNAs at wobble position. The sequence is that of Cytoplasmic tRNA 2-thiolation protein 1 from Aedes aegypti (Yellowfever mosquito).